We begin with the raw amino-acid sequence, 543 residues long: MTRYIFVTGGVVSSLGKGIASASLAAILEARGLKVTMLKLDPYINVDPGTMSPFQHGEVFVTHDGAETDLDLGHYERFIRTTMSKSNNFTTGRVYEDVLRKERRGDYLGATIQVIPHITDEIKRRIIKGAGDADVALVEIGGTVGDIESQPFLEAIRQLRVEVGAKRAMLMHLTLVPYIATAGETKTKPTQHSVKELRSIGLQPDVLVCRSDHPIDVSSRRKIALFTNVEERAVISLEDVDTIYKIPGVLHAQGLDDFVVERFGLECGGADLSEWDRVVDAKLNPEKEVTIAMVGKYMELLDAYKSLIEAMSHAGIQNRTKVNLRYIDSEDIENQGTGLLEGVDAILVPGGFGLRGVEGKIKTVQYARENKIPYLGICLGMQVAVIEYARNVVGWTDANSTEFDMASQHPVVGLITEWQDAAGSVEQRSENSDLGGTMRLGAQDCQLQAGSKVHDCYGKDVIVERHRHRYEVNNNLLPQLTEAGLKVTGRSGDGALVEVVEAPDHPWFVACQFHPEFTSTPRDGHPLFSGFVNAALAQKAKKV.

Residues 1–265 are amidoligase domain; that stretch reads MTRYIFVTGG…DDFVVERFGL (265 aa). A CTP-binding site is contributed by Ser-13. Ser-13 serves as a coordination point for UTP. Residues 14–19 and Asp-71 contribute to the ATP site; that span reads SLGKGI. Positions 71 and 139 each coordinate Mg(2+). CTP contacts are provided by residues 146–148, 186–191, and Lys-222; these read DIE and KTKPTQ. UTP contacts are provided by residues 186–191 and Lys-222; that span reads KTKPTQ. Residues 290–541 form the Glutamine amidotransferase type-1 domain; that stretch reads TIAMVGKYME…VNAALAQKAK (252 aa). Gly-351 is a binding site for L-glutamine. Cys-378 acts as the Nucleophile; for glutamine hydrolysis in catalysis. L-glutamine is bound by residues 379–382, Glu-402, and Arg-469; that span reads LGMQ. Residues His-514 and Glu-516 contribute to the active site.

This sequence belongs to the CTP synthase family. Homotetramer.

The enzyme catalyses UTP + L-glutamine + ATP + H2O = CTP + L-glutamate + ADP + phosphate + 2 H(+). The catalysed reaction is L-glutamine + H2O = L-glutamate + NH4(+). It carries out the reaction UTP + NH4(+) + ATP = CTP + ADP + phosphate + 2 H(+). The protein operates within pyrimidine metabolism; CTP biosynthesis via de novo pathway; CTP from UDP: step 2/2. With respect to regulation, allosterically activated by GTP, when glutamine is the substrate; GTP has no effect on the reaction when ammonia is the substrate. The allosteric effector GTP functions by stabilizing the protein conformation that binds the tetrahedral intermediate(s) formed during glutamine hydrolysis. Inhibited by the product CTP, via allosteric rather than competitive inhibition. Catalyzes the ATP-dependent amination of UTP to CTP with either L-glutamine or ammonia as the source of nitrogen. Regulates intracellular CTP levels through interactions with the four ribonucleotide triphosphates. This chain is CTP synthase, found in Ectopseudomonas mendocina (strain ymp) (Pseudomonas mendocina).